Consider the following 3390-residue polypeptide: Genome polyprotein (3390 aa).

The interaction with host EXOC1 stretch occupies residues 1–15 (MNNQRKKTGKPSINM). At 1-100 (MNNQRKKTGK…MLSIINKRKK (100 aa)) the chain is on the cytoplasmic side. The hydrophobic; homodimerization of capsid protein C stretch occupies residues 37-72 (LLNGQGPMKLVMAFIAFLRFLAIPPTAGVLARWGTF). Positions 101-114 (TSLCLMMMLPATLA) are cleaved as a propeptide — ER anchor for the capsid protein C, removed in mature form by serine protease NS3. A helical membrane pass occupies residues 101–118 (TSLCLMMMLPATLAFHLT). The Extracellular segment spans residues 119 to 243 (SRDGEPRMIV…VEKVETWALR (125 aa)). N-linked (GlcNAc...) asparagine; by host glycosylation occurs at Asn183. A helical transmembrane segment spans residues 244–264 (HPGFTILALFLAHYIGTSLTQ). A topological domain (cytoplasmic) is located at residue Lys265. Residues 266–280 (VVIFILLMLVTPSMT) form a helical membrane-spanning segment. Over 281-723 (MRCVGVGNRD…VHQIFGSAYT (443 aa)) the chain is Extracellular. 4 cysteine pairs are disulfide-bonded: Cys283/Cys310, Cys340/Cys401, Cys354/Cys385, and Cys372/Cys396. A glycan (N-linked (GlcNAc...) asparagine; by host) is linked at Asn347. The tract at residues 378–391 (DRGWGNGCGLFGKG) is fusion peptide. An N-linked (GlcNAc...) asparagine; by host glycan is attached at Asn433. 2 disulfide bridges follow: Cys463/Cys563 and Cys580/Cys611. A helical transmembrane segment spans residues 724–744 (ALFSGVSWIMKIGIGVLLTWI). Topologically, residues 745–750 (GLNSKN) are cytoplasmic. The helical transmembrane segment at 751 to 771 (TSMSFSCIAIGIITLYLGVVV) threads the bilayer. The Extracellular segment spans residues 772-1193 (QADMGCVINW…MIGSNASDRM (422 aa)). Cystine bridges form between Cys777–Cys788, Cys828–Cys916, Cys952–Cys996, Cys1053–Cys1102, Cys1064–Cys1086, and Cys1085–Cys1089. 2 N-linked (GlcNAc...) asparagine; by host glycosylation sites follow: Asn903 and Asn980. Residues Asn1132 and Asn1188 are each glycosylated (N-linked (GlcNAc...) asparagine; by host). The chain crosses the membrane as a helical span at residues 1194–1218 (GMGVTYLALIATFKIQPFLALGFFL). Residues 1219 to 1224 (RKLTSR) are Cytoplasmic-facing. Residues 1225–1243 (ENLLLGVGLAMAATLRLPE) traverse the membrane as a helical segment. The Lumenal segment spans residues 1244-1267 (DIEQMANGIALGLMALKLITQFET). Residues 1268-1288 (YQLWTALVSLTCSNTIFTLTV) form a helical membrane-spanning segment. Position 1289 (Ala1289) is a topological domain, cytoplasmic. A helical membrane pass occupies residues 1290 to 1308 (WRTATLILAGISLLPVCQS). Over 1309 to 1315 (SSMRKTD) the chain is Lumenal. The helical transmembrane segment at 1316–1336 (WLPMTVAAMGVPPLPLFIFSL) threads the bilayer. Residues 1337–1344 (KDTLKRRS) lie on the Cytoplasmic side of the membrane. A helical membrane pass occupies residues 1345 to 1365 (WPLNEGVMAVGLVSILASSLL). Residues 1366–1368 (RND) are Lumenal-facing. Residues 1369-1389 (VPMAGPLVAGGLLIACYVITG) traverse the membrane as a helical segment. Residues 1390–1443 (TSADLTVEKAADVTWEEEAEQTGVSHNLMITVDDDGTMRIKDDETENILTVLLK) lie on the Cytoplasmic side of the membrane. The interacts with and activates NS3 protease stretch occupies residues 1396–1435 (VEKAADVTWEEEAEQTGVSHNLMITVDDDGTMRIKDDETE). Positions 1444-1464 (TALLIVSGIFPCSIPATLLVW) form an intramembrane region, helical. Residues 1465-2146 (HTWQKQTQRS…VEELPETMET (682 aa)) lie on the Cytoplasmic side of the membrane. The Peptidase S7 domain maps to 1474-1651 (SGVLWDVPSP…NAEPDGPTPE (178 aa)). Active-site charge relay system; for serine protease NS3 activity residues include His1524, Asp1548, and Ser1608. The Helicase ATP-binding domain maps to 1654–1810 (EEMFKKRNLT…QSNAPIQDEE (157 aa)). Residues 1658-1661 (KKRN) form an important for RNA-binding region. 1667–1674 (LHPGSGKT) serves as a coordination point for ATP. The DEAH box motif lies at 1758 to 1761 (DEAH). The region spanning 1821 to 1986 (GNEWITDFVG…GIIPALFEPE (166 aa)) is the Helicase C-terminal domain. Lys1862 bears the N6-acetyllysine; by host mark. A helical membrane pass occupies residues 2147 to 2167 (LLLLGLMILLTGGAMLFLISG). Residues 2168 to 2169 (KG) are Lumenal-facing. Residues 2170-2190 (IGKTSIGLICVIASSGMLWMA) constitute an intramembrane region (helical). A topological domain (lumenal) is located at residue Asp2191. Residues 2192 to 2212 (VPLQWIASAIVLEFFMMVLLI) form a helical membrane-spanning segment. Topologically, residues 2213-2227 (PEPEKQRTPQDNQLA) are cytoplasmic. The chain crosses the membrane as a helical span at residues 2228 to 2248 (YVVIGILTLAAIVAANEMGLL). The Lumenal portion of the chain corresponds to 2249 to 2273 (ETTKRDLGMSKEPGVVSPTSYLDVD). Residues 2274-2294 (LHPASAWTLYAVATTVITPML) constitute an intramembrane region (helical). Residues 2295 to 2305 (RHTIENSTANV) lie on the Lumenal side of the membrane. Residues Asn2300 and Asn2304 are each glycosylated (N-linked (GlcNAc...) asparagine; by host). The segment at residues 2306-2326 (SLAAIANQAVVLMGLDKGWPI) is an intramembrane region (helical). Residues 2327 to 2346 (SKMDLGVPLLALGCYSQVNP) are Lumenal-facing. A helical membrane pass occupies residues 2347–2367 (LTLIAAVLLLVTHYAIIGPGL). Residues 2368–2412 (QAKATREAQKRTAAGIMKNPTVDGIMTIDLDPVIYDSKFEKQLGQ) are Cytoplasmic-facing. Residues 2413 to 2433 (VMLLVLCAVQLLLMRTSWALC) form a helical membrane-spanning segment. Residues 2434–2458 (EVLTLATGPITTLWEGSPGKFWNTT) lie on the Lumenal side of the membrane. Asn2456 carries N-linked (GlcNAc...) asparagine; by host glycosylation. Residues 2459 to 2479 (IAVSMANIFRGSYLAGAGLAF) traverse the membrane as a helical segment. Residues 2480–3390 (SIMKSVGTGK…KEEESEGAIW (911 aa)) are Cytoplasmic-facing. Residues 2492–2753 (TGSQGETLGE…DVDLGAGTRH (262 aa)) form the mRNA cap 0-1 NS5-type MT domain. Ser2546 lines the S-adenosyl-L-methionine pocket. Position 2546 is a phosphoserine (Ser2546). Lys2551 serves as the catalytic For 2'-O-MTase activity. Positions 2567 to 2570 (VIDL) match the SUMO-interacting motif motif. Gly2576, Trp2577, Thr2594, Lys2595, Asp2621, and Val2622 together coordinate S-adenosyl-L-methionine. Asp2636 serves as the catalytic For 2'-O-MTase activity. Ile2637 is an S-adenosyl-L-methionine binding site. Active-site for 2'-O-MTase activity residues include Lys2670 and Glu2706. Tyr2708 is a binding site for S-adenosyl-L-methionine. Residues Glu2927, His2931, Cys2936, and Cys2939 each contribute to the Zn(2+) site. Positions 3018-3168 (AMYADDTAGW…PIDDRFANAL (151 aa)) constitute a RdRp catalytic domain. Positions 3202, 3218, and 3337 each coordinate Zn(2+).

It in the N-terminal section; belongs to the class I-like SAM-binding methyltransferase superfamily. mRNA cap 0-1 NS5-type methyltransferase family. Homodimer. Interacts (via N-terminus) with host EXOC1 (via C-terminus); this interaction results in EXOC1 degradation through the proteasome degradation pathway. As to quaternary structure, forms heterodimers with envelope protein E in the endoplasmic reticulum and Golgi. In terms of assembly, homodimer; in the endoplasmic reticulum and Golgi. Interacts with protein prM. Interacts with non-structural protein 1. Homodimer; Homohexamer when secreted. Interacts with envelope protein E. As to quaternary structure, interacts (via N-terminus) with serine protease NS3. In terms of assembly, forms a heterodimer with serine protease NS3. May form homooligomers. Forms a heterodimer with NS2B. Interacts with NS4B. Interacts with unphosphorylated RNA-directed RNA polymerase NS5; this interaction stimulates RNA-directed RNA polymerase NS5 guanylyltransferase activity. As to quaternary structure, interacts with host MAVS; this interaction inhibits the synthesis of IFN-beta. Interacts with host AUP1; the interaction occurs in the presence of Dengue virus NS4B and induces lipophagy which facilitates production of virus progeny particles. In terms of assembly, interacts with serine protease NS3. Homodimer. Interacts with host STAT2; this interaction inhibits the phosphorylation of the latter, and, when all viral proteins are present (polyprotein), targets STAT2 for degradation. Interacts with serine protease NS3. Specific enzymatic cleavages in vivo yield mature proteins. Cleavages in the lumen of endoplasmic reticulum are performed by host signal peptidase, whereas cleavages in the cytoplasmic side are performed by serine protease NS3. Signal cleavage at the 2K-4B site requires a prior NS3 protease-mediated cleavage at the 4A-2K site. In terms of processing, cleaved in post-Golgi vesicles by a host furin, releasing the mature small envelope protein M, and peptide pr. This cleavage is incomplete as up to 30% of viral particles still carry uncleaved prM. Post-translationally, N-glycosylated. N-glycosylated. The excreted form is glycosylated and this is required for efficient secretion of the protein from infected cells. In terms of processing, acetylated by host KAT5. Acetylation modulates NS3 RNA-binding and unwinding activities and plays an important positive role for viral replication. Post-translationally, sumoylation of RNA-directed RNA polymerase NS5 increases NS5 protein stability allowing proper viral RNA replication. Phosphorylated on serines residues. This phosphorylation may trigger NS5 nuclear localization.

Its subcellular location is the virion. The protein resides in the host nucleus. It is found in the host cytoplasm. The protein localises to the host perinuclear region. It localises to the secreted. Its subcellular location is the virion membrane. The protein resides in the host endoplasmic reticulum membrane. It is found in the host mitochondrion. It carries out the reaction Selective hydrolysis of -Xaa-Xaa-|-Yaa- bonds in which each of the Xaa can be either Arg or Lys and Yaa can be either Ser or Ala.. The enzyme catalyses RNA(n) + a ribonucleoside 5'-triphosphate = RNA(n+1) + diphosphate. It catalyses the reaction a ribonucleoside 5'-triphosphate + H2O = a ribonucleoside 5'-diphosphate + phosphate + H(+). The catalysed reaction is ATP + H2O = ADP + phosphate + H(+). It carries out the reaction a 5'-end (5'-triphosphoguanosine)-ribonucleoside in mRNA + S-adenosyl-L-methionine = a 5'-end (N(7)-methyl 5'-triphosphoguanosine)-ribonucleoside in mRNA + S-adenosyl-L-homocysteine. The enzyme catalyses a 5'-end (N(7)-methyl 5'-triphosphoguanosine)-ribonucleoside in mRNA + S-adenosyl-L-methionine = a 5'-end (N(7)-methyl 5'-triphosphoguanosine)-(2'-O-methyl-ribonucleoside) in mRNA + S-adenosyl-L-homocysteine + H(+). In terms of biological role, plays a role in virus budding by binding to the cell membrane and gathering the viral RNA into a nucleocapsid that forms the core of a mature virus particle. During virus entry, may induce genome penetration into the host cytoplasm after hemifusion induced by the surface proteins. Can migrate to the cell nucleus where it modulates host functions. Overcomes the anti-viral effects of host EXOC1 by sequestering and degrading the latter through the proteasome degradation pathway. Its function is as follows. Inhibits RNA silencing by interfering with host Dicer. Functionally, prevents premature fusion activity of envelope proteins in trans-Golgi by binding to envelope protein E at pH6.0. After virion release in extracellular space, gets dissociated from E dimers. Acts as a chaperone for envelope protein E during intracellular virion assembly by masking and inactivating envelope protein E fusion peptide. prM is the only viral peptide matured by host furin in the trans-Golgi network probably to avoid catastrophic activation of the viral fusion activity in acidic Golgi compartment prior to virion release. prM-E cleavage is inefficient, and many virions are only partially matured. These uncleaved prM would play a role in immune evasion. In terms of biological role, may play a role in virus budding. Exerts cytotoxic effects by activating a mitochondrial apoptotic pathway through M ectodomain. May display a viroporin activity. Its function is as follows. Binds to host cell surface receptor and mediates fusion between viral and cellular membranes. Envelope protein is synthesized in the endoplasmic reticulum in the form of heterodimer with protein prM. They play a role in virion budding in the ER, and the newly formed immature particle is covered with 60 spikes composed of heterodimer between precursor prM and envelope protein E. The virion is transported to the Golgi apparatus where the low pH causes dissociation of PrM-E heterodimers and formation of E homodimers. prM-E cleavage is inefficient, and many virions are only partially matured. These uncleaved prM would play a role in immune evasion. Functionally, involved in immune evasion, pathogenesis and viral replication. Once cleaved off the polyprotein, is targeted to three destinations: the viral replication cycle, the plasma membrane and the extracellular compartment. Essential for viral replication. Required for formation of the replication complex and recruitment of other non-structural proteins to the ER-derived membrane structures. Excreted as a hexameric lipoparticle that plays a role against host immune response. Antagonizing the complement function. Binds to the host macrophages and dendritic cells. Inhibits signal transduction originating from Toll-like receptor 3 (TLR3). Disrupts the host endothelial glycocalyx layer of host pulmonary microvascular endothelial cells, inducing degradation of sialic acid and shedding of heparan sulfate proteoglycans. NS1 induces expression of sialidases, heparanase, and activates cathepsin L, which activates heparanase via enzymatic cleavage. These effects are probably linked to the endothelial hyperpermeability observed in severe dengue disease. In terms of biological role, component of the viral RNA replication complex that functions in virion assembly and antagonizes the host immune response. Its function is as follows. Required cofactor for the serine protease function of NS3. May have membrane-destabilizing activity and form viroporins. Functionally, displays three enzymatic activities: serine protease, NTPase and RNA helicase. NS3 serine protease, in association with NS2B, performs its autocleavage and cleaves the polyprotein at dibasic sites in the cytoplasm: C-prM, NS2A-NS2B, NS2B-NS3, NS3-NS4A, NS4A-2K and NS4B-NS5. NS3 RNA helicase binds RNA and unwinds dsRNA in the 3' to 5' direction. Regulates the ATPase activity of the NS3 helicase activity. NS4A allows NS3 helicase to conserve energy during unwinding. Plays a role in the inhibition of the host innate immune response. Interacts with host MAVS and thereby prevents the interaction between RIGI and MAVS. In turn, IFN-beta production is impaired. Interacts with host AUP1 which mediates induction of lipophagy in host cells and facilitates production of virus progeny particles. In terms of biological role, functions as a signal peptide for NS4B and is required for the interferon antagonism activity of the latter. Its function is as follows. Induces the formation of ER-derived membrane vesicles where the viral replication takes place. Inhibits interferon (IFN)-induced host STAT1 phosphorylation and nuclear translocation, thereby preventing the establishment of cellular antiviral state by blocking the IFN-alpha/beta pathway. Functionally, replicates the viral (+) and (-) RNA genome, and performs the capping of genomes in the cytoplasm. NS5 methylates viral RNA cap at guanine N-7 and ribose 2'-O positions. Besides its role in RNA genome replication, also prevents the establishment of cellular antiviral state by blocking the interferon-alpha/beta (IFN-alpha/beta) signaling pathway. Inhibits host TYK2 and STAT2 phosphorylation, thereby preventing activation of JAK-STAT signaling pathway. This chain is Genome polyprotein, found in Dengue virus type 3 (strain China/80-2/1980) (DENV-3).